A 727-amino-acid chain; its full sequence is Endothelin-converting enzyme homolog (727 aa).

The Cytoplasmic segment spans residues 1–44 (MSFNFSRYSGAYTTTFSFLLLALLIVSAVLLSRPYAPALLHAEE). A helical; Signal-anchor for type II membrane protein transmembrane segment spans residues 45 to 65 (AYCVSMSCVTAAASVLSLMDA). In terms of domain architecture, Peptidase M13 spans 46-727 (YCVSMSCVTA…MNPVHKCEVW (682 aa)). 5 cysteine pairs are disulfide-bonded: C47–C52, C70–C712, C78–C672, C134–C392, and C601–C724. Residues 66-727 (TADPCSDFYQ…MNPVHKCEVW (662 aa)) lie on the Extracellular side of the membrane. Residues N138, N160, N164, N169, N222, N309, N337, N340, and N511 are each glycosylated (N-linked (GlcNAc...) asparagine). H564 is a Zn(2+) binding site. The active site involves E565. Residue H568 participates in Zn(2+) binding. 2 N-linked (GlcNAc...) asparagine glycosylation sites follow: N589 and N608. Residue E624 coordinates Zn(2+). Residue D628 is the Proton donor of the active site. N656 carries N-linked (GlcNAc...) asparagine glycosylation.

The protein belongs to the peptidase M13 family. It depends on Zn(2+) as a cofactor. As to expression, highly expressed in brain and midgut, and to a lesser extent in fat body, ovaries, testes and haemocytes.

Its subcellular location is the cell membrane. The chain is Endothelin-converting enzyme homolog from Locusta migratoria (Migratory locust).